Consider the following 1135-residue polypeptide: Exportin-5 (1135 aa).

Residues 32 to 117 (SQVFLEEIKT…KEKLVTILVD (86 aa)) enclose the Importin N-terminal domain. Residues 630 to 631 (TE) form a pre-siRNA binding region.

Belongs to the exportin family. As to quaternary structure, found in a nuclear export complex with RanGTP, exportin and pre-miRNA.

It is found in the nucleus. Its subcellular location is the cytoplasm. Functionally, mediates the nuclear export of proteins bearing a double-stranded RNA binding domain (dsRBD) and double-stranded RNAs (cargos). Its function is as follows. Mediates the nuclear export of micro-RNA precursors, which form short hairpins. The protein is Exportin-5 (xpo5) of Dictyostelium discoideum (Social amoeba).